The primary structure comprises 415 residues: Putative ankyrin repeat protein FPV034 (415 aa).

ANK repeat units follow at residues 12–41, 43–72, 76–105, 107–135, 139–168, 170–200, 203–232, 237–266, 270–299, and 303–332; these read ICIKLLEQAIELKDYIVVRMILNQQENINT, KHFNMLRKAVLNHDHNLVNIFIDKNFNINI, VGYTLLRYAVEVDDVNIAKILLDAGSIINK, DYRLLHSAITHENKKMIELLCLHGININV, KGYTALYYTICNNNYDMVCFLLEKNADISI, NKYSMLHFLSTSNKYHNVMAVLLDKGIDVNI, HVKAPIHVAVERNNIYGTMLLINRNADVNI, GGRTSLHLAIKERNYEAAFVLINNGANVDS, VGNTPIFIAASLQDVRFMKLLLDNGADINV, and FGETPVNMVITGGSKEVTQYTVSYLISLKV.

In Fowlpox virus (strain NVSL) (FPV), this protein is Putative ankyrin repeat protein FPV034 (ANK2).